Here is a 793-residue protein sequence, read N- to C-terminus: Serine/threonine-protein phosphatase 1 regulatory subunit GAC1 (793 aa).

A compositionally biased stretch (polar residues) spans 1–10; it reads MVIQTATTLS. The segment at 1-20 is disordered; sequence MVIQTATTLSPAKARPSFPH. One can recognise a CBM21 domain in the interval 235–360; sequence TKYLNGQNVK…NNNGKNYHLF (126 aa). Phosphoserine occurs at positions 415 and 424. Disordered stretches follow at residues 450 to 491 and 616 to 671; these read LENA…SIDL and TTMD…LNDH. The segment covering 623–633 has biased composition (polar residues); the sequence is KTSTINNSTDT. Residues 637–648 are compositionally biased toward basic and acidic residues; that stretch reads PSKENGTVKENK. A compositionally biased stretch (low complexity) spans 649–665; sequence SSANSTSAPSSSQNRAS.

In terms of biological role, regulates the activity of glycogen synthase. It is most probably a regulatory subunit for protein phosphatase type 1. The chain is Serine/threonine-protein phosphatase 1 regulatory subunit GAC1 (GAC1) from Saccharomyces cerevisiae (strain ATCC 204508 / S288c) (Baker's yeast).